The following is a 269-amino-acid chain: Surfeit locus protein 4 (269 aa).

A run of 5 helical transmembrane segments spans residues 64-84 (LLAS…CILV), 92-112 (YACF…SILW), 179-199 (FFSI…AIGF), 203-223 (LAAL…NAFW), and 239-259 (FFQT…GPGG). The Di-lysine motif signature appears at 266-269 (KKEW).

It belongs to the SURF4 family. As to quaternary structure, found in a complex composed at least of SURF4, TMED2 and TMED10. May interact with LMAN1. Interacts with ZFYVE27 and with KIF5A in a ZFYVE27-dependent manner. Interacts with STING1. Interacts with SAR1B. Interacts with TMEM41B.

Its subcellular location is the endoplasmic reticulum membrane. The protein resides in the endoplasmic reticulum-Golgi intermediate compartment membrane. The protein localises to the golgi apparatus membrane. Functionally, endoplasmic reticulum cargo receptor that mediates the export of lipoproteins by recruiting cargos into COPII vesicles to facilitate their secretion. Acts as a cargo receptor for lipoproteins bearing both APOB and APOA1, thereby regulating lipoprotein delivery and the maintenance of lipid homeostasis. Synergizes with the GTPase SAR1B to mediate transport of circulating lipoproteins. Promotes the secretion of PCSK9. Also mediates the efficient secretion of erythropoietin (EPO). May also play a role in the maintenance of the architecture of the endoplasmic reticulum-Golgi intermediate compartment and of the Golgi. The polypeptide is Surfeit locus protein 4 (Bos taurus (Bovine)).